Here is a 235-residue protein sequence, read N- to C-terminus: Probable ribonuclease P protein subunit 3 (235 aa).

This sequence belongs to the eukaryotic/archaeal RNase P protein component 3 family.

The protein resides in the nucleus. It carries out the reaction Endonucleolytic cleavage of RNA, removing 5'-extranucleotides from tRNA precursor.. Part of ribonuclease P, a protein complex that generates mature tRNA molecules by cleaving their 5'-ends. The chain is Probable ribonuclease P protein subunit 3 from Schizosaccharomyces pombe (strain 972 / ATCC 24843) (Fission yeast).